The following is a 183-amino-acid chain: Large ribosomal subunit protein uL6 (183 aa).

It belongs to the universal ribosomal protein uL6 family. As to quaternary structure, part of the 50S ribosomal subunit.

In terms of biological role, this protein binds to the 23S rRNA, and is important in its secondary structure. It is located near the subunit interface in the base of the L7/L12 stalk, and near the tRNA binding site of the peptidyltransferase center. This Chlamydia trachomatis serovar D (strain ATCC VR-885 / DSM 19411 / UW-3/Cx) protein is Large ribosomal subunit protein uL6.